The primary structure comprises 100 residues: Small ribosomal subunit protein uS14c (100 aa).

The protein belongs to the universal ribosomal protein uS14 family. In terms of assembly, part of the 30S ribosomal subunit.

The protein resides in the plastid. It localises to the chloroplast. Its function is as follows. Binds 16S rRNA, required for the assembly of 30S particles. The polypeptide is Small ribosomal subunit protein uS14c (Pelargonium hortorum (Common geranium)).